Consider the following 202-residue polypeptide: NAD(P)H dehydrogenase (quinone) 2 (202 aa).

In terms of domain architecture, Flavodoxin-like spans 4–190 (VLVLYYSSYG…AGAFHQGEIV (187 aa)). FMN is bound by residues 10–15 (SSYGHI) and 78–80 (TRF). Residue Tyr12 participates in NAD(+) binding. Position 98 (Trp98) interacts with substrate. FMN is bound by residues 113–119 (STGTQHG) and His134.

Belongs to the WrbA family. FMN serves as cofactor.

The enzyme catalyses a quinone + NADH + H(+) = a quinol + NAD(+). It catalyses the reaction a quinone + NADPH + H(+) = a quinol + NADP(+). The protein is NAD(P)H dehydrogenase (quinone) 2 of Rhizobium meliloti (strain 1021) (Ensifer meliloti).